The primary structure comprises 264 residues: MKKLKLHGFNNLTKSLSFCIYDICYAKTAEERDGYIAYIDELYNANRLTEILSETCSIIGANILNIARQDYEPQGASVTILVSEEPVDPKLIDKTEHPGPLPETVVAHLDKSHICVHTYPESHPEGGLCTFRADIEVSTCGVISPLKALNYLIHQLESDIVTIDYRVRGFTRDINGMKHFIDHEINSIQNFMSDDMKALYDMVDVNVYQENIFHTKMLLKEFDLKHYMFHTKPEDLTDSERQEITAALWKEMREIYYGRNMPAV.

Serine 112 functions as the Schiff-base intermediate with substrate; via pyruvic acid in the catalytic mechanism. Serine 112 is subject to Pyruvic acid (Ser); by autocatalysis. The active-site Proton acceptor; for processing activity is histidine 117. Cysteine 140 functions as the Proton donor; for catalytic activity in the catalytic mechanism.

This sequence belongs to the prokaryotic AdoMetDC family. Type 2 subfamily. In terms of assembly, heterooctamer of four alpha and four beta chains arranged as a tetramer of alpha/beta heterodimers. The cofactor is pyruvate. Post-translationally, is synthesized initially as an inactive proenzyme. Formation of the active enzyme involves a self-maturation process in which the active site pyruvoyl group is generated from an internal serine residue via an autocatalytic post-translational modification. Two non-identical subunits are generated from the proenzyme in this reaction, and the pyruvate is formed at the N-terminus of the alpha chain, which is derived from the carboxyl end of the proenzyme. The post-translation cleavage follows an unusual pathway, termed non-hydrolytic serinolysis, in which the side chain hydroxyl group of the serine supplies its oxygen atom to form the C-terminus of the beta chain, while the remainder of the serine residue undergoes an oxidative deamination to produce ammonia and the pyruvoyl group blocking the N-terminus of the alpha chain.

The catalysed reaction is S-adenosyl-L-methionine + H(+) = S-adenosyl 3-(methylsulfanyl)propylamine + CO2. It participates in amine and polyamine biosynthesis; S-adenosylmethioninamine biosynthesis; S-adenosylmethioninamine from S-adenosyl-L-methionine: step 1/1. Its function is as follows. Catalyzes the decarboxylation of S-adenosylmethionine to S-adenosylmethioninamine (dcAdoMet), the propylamine donor required for the synthesis of the polyamines spermine and spermidine from the diamine putrescine. The sequence is that of S-adenosylmethionine decarboxylase proenzyme from Shigella boydii serotype 4 (strain Sb227).